The primary structure comprises 315 residues: MSKPLRIIFAGTPDFAARHLSALIDSHHEVIGVYTQPDRPAGRGKKLTASPVKELALEHNIPVFQPENFKSDEAKQELVDQNADLMVVVAYGLLLPQAVLDTPKLGCINVHGSILPRWRGAAPIQRSIWAGDAETGVTIMQMDIGLDTGDMLKIATLPIEATDTSASMYDKLAELGPVALVDCLSDIADGSAIAQKQDDELANYAKKLSKEEAKIDWTMDAIAIERCVRAFNPWPMSHFSVEDKAIKVWQSRVESYTGDATPGTIIQADKTGIYVATGSDAIVFEQLQVPGKKAMGVQDILNSRKEWFEVGNTLN.

113–116 (SILP) lines the (6S)-5,6,7,8-tetrahydrofolate pocket.

It belongs to the Fmt family.

It carries out the reaction L-methionyl-tRNA(fMet) + (6R)-10-formyltetrahydrofolate = N-formyl-L-methionyl-tRNA(fMet) + (6S)-5,6,7,8-tetrahydrofolate + H(+). In terms of biological role, attaches a formyl group to the free amino group of methionyl-tRNA(fMet). The formyl group appears to play a dual role in the initiator identity of N-formylmethionyl-tRNA by promoting its recognition by IF2 and preventing the misappropriation of this tRNA by the elongation apparatus. This chain is Methionyl-tRNA formyltransferase, found in Aliivibrio fischeri (strain ATCC 700601 / ES114) (Vibrio fischeri).